Consider the following 418-residue polypeptide: Secreted beta-glucosidase SUN41 (418 aa).

The first 23 residues, 1–23 (MRFSQATVLAFAALSLAAPAFEA), serve as a signal peptide directing secretion. The span at 81 to 97 (SEETSSTSTSISSTTTI) shows a compositional bias: low complexity. The segment at 81-150 (SEETSSTSTS…SGSTNGIEGD (70 aa)) is disordered. N-linked (GlcNAc...) asparagine glycosylation is present at asparagine 100. Over residues 112–126 (SLPSGTIKPSSFATE) the composition is skewed to polar residues. Low complexity predominate over residues 127–136 (SQSQSQSSST).

This sequence belongs to the SUN family. Post-translationally, predicted to be a substrate for cleavage by KEX2.

The protein resides in the secreted. It localises to the cell wall. Its function is as follows. Cell surface beta-glucosidase involved in cytokinesis, cell wall biogenesis, adhesion to host tissue, and biofilm formation; thus playing an important role in the host-pathogen interaction. Has hydrolytic activity on linear (1-&gt;3)-beta-D-glucans such as laminaribiose and other laminarioligosaccharides. In Candida albicans (strain SC5314 / ATCC MYA-2876) (Yeast), this protein is Secreted beta-glucosidase SUN41.